The sequence spans 165 residues: Secreted acidic protein 2 (165 aa).

2 stretches are compositionally biased toward acidic residues: residues 1–58 (WSXS…DDSG) and 80–102 (ESSD…DAYN). The segment at 1-112 (WSXSGDDDDD…DDSQAGELNS (112 aa)) is disordered. The span at 103–112 (DDSQAGELNS) shows a compositional bias: polar residues.

As to expression, component of the acid-insoluble and acid-soluble organic matrix of the aragonitic skeleton (at protein level).

It is found in the secreted. The sequence is that of Secreted acidic protein 2 from Acropora millepora (Staghorn coral).